Consider the following 441-residue polypeptide: Nucleoprotein (441 aa).

Residues 1-56 (MSYTPGHHAGSRSSSGNRSGILKKTSWVDQSERSHQTYNRGRKPQPKFTVSTQPQG) are disordered. Low complexity predominate over residues 11–20 (SRSSSGNRSG). Residues 53–193 (QPQGNPIPHY…GYYVEGSGRS (141 aa)) are RNA-binding. One can recognise a CoV N NTD domain in the interval 60-189 (PHYSWFSGIT…ILPQGYYVEG (130 aa)). Arginine 105 and arginine 121 together coordinate RNA. Serine 158 carries the phosphoserine; by host modification. Arginine 163 provides a ligand contact to RNA. Threonine 173 is subject to Phosphothreonine; by host. The tract at residues 186 to 226 (YVEGSGRSASNSRPGSRSQSRGPNNRSLSRSNSNFRHSDSI) is disordered. The span at 189–220 (GSGRSASNSRPGSRSQSRGPNNRSLSRSNSNF) shows a compositional bias: low complexity. Serine 190 is subject to Phosphoserine; by host. Residues 257 to 379 (AKEIRHKILM…ENLDAYVNSN (123 aa)) form the CoV N CTD domain. The tract at residues 264 to 382 (ILMKPRQKRT…DAYVNSNQNT (119 aa)) is dimerization. The segment covering 380 to 389 (QNTVSGSLSP) has biased composition (polar residues). Positions 380-408 (QNTVSGSLSPKPQRKRGVKQSPESFDSLN) are disordered. A phosphoserine; by host mark is found at serine 388 and serine 417. A Phosphothreonine; by host modification is found at threonine 421.

The protein belongs to the betacoronavirus nucleocapsid protein family. As to quaternary structure, homooligomer. Both monomeric and oligomeric forms interact with RNA. Interacts with protein M. Interacts with NSP3; this interaction serves to tether the genome to the newly translated replicase-transcriptase complex at a very early stage of infection. ADP-ribosylated. The ADP-ribosylation is retained in the virion during infection. Post-translationally, phosphorylated on serine and threonine residues.

It localises to the virion. It is found in the host endoplasmic reticulum-Golgi intermediate compartment. The protein resides in the host Golgi apparatus. In terms of biological role, packages the positive strand viral genome RNA into a helical ribonucleocapsid (RNP) and plays a fundamental role during virion assembly through its interactions with the viral genome and membrane protein M. Plays an important role in enhancing the efficiency of subgenomic viral RNA transcription as well as viral replication. The protein is Nucleoprotein of Homo sapiens (Human).